A 201-amino-acid chain; its full sequence is Oxalate oxidase 1 (201 aa).

A disulfide bridge connects residues Cys10 and Cys26. Positions 40–191 constitute a Cupin type-1 domain; the sequence is SKLTKAGNTS…ALRVEAGVVE (152 aa). The N-linked (GlcNAc...) asparagine glycan is linked to Asn47. Positions 75 and 85 each coordinate oxalate. Mn(2+) is bound by residues His88, His90, Glu95, and His137. Residues His90 and Glu95 each coordinate oxalate.

Belongs to the germin family. In terms of assembly, homo hexamer; a trimer of dimers. Glycosylated. A form called G contains antennary GlcNAc residues, whereas a form called G' lacks antennary GlcNAc residues in its otherwise identical glycans.

The protein localises to the secreted. Its subcellular location is the extracellular space. The protein resides in the apoplast. It is found in the cell wall. It carries out the reaction oxalate + O2 + 2 H(+) = H2O2 + 2 CO2. Functionally, releases hydrogen peroxide in the apoplast which may be important for cross-linking reactions in the cell wall biochemistry. May play an important role in several aspects of plant growth and defense mechanisms. The protein is Oxalate oxidase 1 of Hordeum vulgare (Barley).